Reading from the N-terminus, the 545-residue chain is Tripartite motif-containing protein 55 (545 aa).

Residues 26-82 (CPICLEMFTKPVVILPCQHNLCRKCASDIFQASNPYLPTRGGTTVASGGRFRCPSCR) form an RING-type zinc finger. Residues 119–161 (LDQPMCEEHEEERINIYCLNCEVPTCSLCKVFGAHKDCQVAPL) form a B box-type zinc finger. Zn(2+)-binding residues include Cys124, His127, Cys147, and His153. Residues 219-258 (YSILEERKTEMTQAITRTQEEKLEHVRTLIRKYSDHLENV) adopt a coiled-coil conformation. Positions 269–327 (MDEPEMAVFLQNAKTLLQKITEASKAFQMEKIEQGYEIMNNFTVNLNREEKIIREIDFS) constitute a COS domain. 2 disordered regions span residues 324 to 378 (IDFS…SELA) and 406 to 528 (LVTQ…GADS). Positions 328–355 (REEEDEDDEGEVDEEGEGEDAVEVEEAE) are enriched in acidic residues. Composition is skewed to low complexity over residues 417–426 (SQQTTQSETS) and 469–493 (SAAEDSSVQSAEVAEAAANEQAAVS). The segment covering 495 to 506 (KESSSTAATSQI) has biased composition (polar residues). Low complexity predominate over residues 510–520 (ASSPQGQAAAL).

Homooligomer and heterooligomer. Interacts with titin/TTN. Interacts with myosins. Interacts with SQSTM1 and NBR1. Probably interacts with TRIM63 and TRIM54. Post-translationally, targeted for degradation through the proteasomal and lysosomal pathways in the presence of SUMO3.

It localises to the nucleus. It is found in the cytoplasm. It carries out the reaction S-ubiquitinyl-[E2 ubiquitin-conjugating enzyme]-L-cysteine + [acceptor protein]-L-lysine = [E2 ubiquitin-conjugating enzyme]-L-cysteine + N(6)-ubiquitinyl-[acceptor protein]-L-lysine.. Its function is as follows. E3 ubiquitin ligase that plays an important role in regulating cardiac development and contractility, muscle growth, metabolism, and fiber-type differentiation. Acts as a critical factor that regulates cardiomyocyte size during development in concert with TRIM63 by regulating E2F1-mediated gene expression. Plays a role in apoptosis induction in cardiomyocytes by promoting ubiquitination of the DUSP1 phosphatase. Promotes non-canonical NF-kappa-B signaling and B-cell-mediated immune responses by mediating NFKB2 'Lys-48'-linked ubiquitination and processing. In turn, NFKB2 is further processed by valosin-containing protein/VCP, an ATPase that mediates ubiquitin-dependent protein degradation by the proteasome. May play a role in preventing macrophages from producing inflammatory factors and migrating by downregulating the level of nuclear NF-kappa-B subunit RELA. Also modifies PPARG via polyubiquitination and accelerates PPARG proteasomal degradation to inhibit its activity. The polypeptide is Tripartite motif-containing protein 55 (Trim55) (Rattus norvegicus (Rat)).